A 38-amino-acid chain; its full sequence is Cytochrome b6-f complex subunit 5 (38 aa).

The chain crosses the membrane as a helical span at residues 5-25 (LLCGIVLGLIPVTLLGLFVAA).

This sequence belongs to the PetG family. As to quaternary structure, the 4 large subunits of the cytochrome b6-f complex are cytochrome b6, subunit IV (17 kDa polypeptide, PetD), cytochrome f and the Rieske protein, while the 4 small subunits are PetG, PetL, PetM and PetN. The complex functions as a dimer.

Its subcellular location is the cellular thylakoid membrane. Component of the cytochrome b6-f complex, which mediates electron transfer between photosystem II (PSII) and photosystem I (PSI), cyclic electron flow around PSI, and state transitions. PetG is required for either the stability or assembly of the cytochrome b6-f complex. The sequence is that of Cytochrome b6-f complex subunit 5 from Parasynechococcus marenigrum (strain WH8102).